Consider the following 110-residue polypeptide: Iron-sulfur cluster assembly protein CyaY (110 aa).

The protein belongs to the frataxin family.

In terms of biological role, involved in iron-sulfur (Fe-S) cluster assembly. May act as a regulator of Fe-S biogenesis. This chain is Iron-sulfur cluster assembly protein CyaY, found in Paracidovorax citrulli (strain AAC00-1) (Acidovorax citrulli).